Reading from the N-terminus, the 216-residue chain is Ras-related protein Rab-5C (216 aa).

S30, A31, G33, K34, S35, S36, H47, E48, T53, G79, N134, K135, D137, A165, and K166 together coordinate GTP. S35 provides a ligand contact to Mg(2+). 2 short sequence motifs (switch) span residues 45-57 (QFHE…IGAA) and 78-94 (AGQE…YRGA). Position 53 (T53) interacts with Mg(2+). The tract at residues 184–216 (KNEPQNAPGGPGRNRVVDLQESSQPSRSQCCSN) is disordered. Residues 203-216 (QESSQPSRSQCCSN) show a composition bias toward polar residues. Residues C213 and C214 are each lipidated (S-geranylgeranyl cysteine).

It belongs to the small GTPase superfamily. Rab family. It depends on Mg(2+) as a cofactor. In terms of tissue distribution, detected in brain, ovary, rectum, small intestine, large intestine, liver, spleen, follicle and kidney (at protein level).

The protein resides in the cell membrane. The protein localises to the early endosome membrane. The catalysed reaction is GTP + H2O = GDP + phosphate + H(+). Its activity is regulated as follows. Regulated by guanine nucleotide exchange factors (GEFs) which promote the exchange of bound GDP for free GTP. Regulated by GTPase activating proteins (GAPs) which increase the GTP hydrolysis activity. Inhibited by GDP dissociation inhibitors (GDIs). In terms of biological role, the small GTPases Rab are key regulators of intracellular membrane trafficking, from the formation of transport vesicles to their fusion with membranes. Rabs cycle between an inactive GDP-bound form and an active GTP-bound form that is able to recruit to membranes different sets of downstream effectors directly responsible for vesicle formation, movement, tethering and fusion. The sequence is that of Ras-related protein Rab-5C (RAB5C) from Gallus gallus (Chicken).